A 1485-amino-acid polypeptide reads, in one-letter code: Putative E3 ubiquitin-protein ligase LIN-1 (1485 aa).

Positions 337-353 (EENEDDSDSELENESVD) are enriched in acidic residues. 2 disordered regions span residues 337–363 (EENE…IFSP) and 384–417 (NQIP…KRDS). The region spanning 510–585 (KPPKDFVCPI…TSWKEQNPEL (76 aa)) is the U-box domain. WD repeat units follow at residues 1204 to 1241 (SSNG…PRVI), 1246 to 1283 (EHTK…IKCI), 1409 to 1448 (SLST…RVAS), and 1454 to 1485 (GHTK…WALD).

Expressed in roots and nodules, and at very low levels in calli and seedling shoots.

The catalysed reaction is S-ubiquitinyl-[E2 ubiquitin-conjugating enzyme]-L-cysteine + [acceptor protein]-L-lysine = [E2 ubiquitin-conjugating enzyme]-L-cysteine + N(6)-ubiquitinyl-[acceptor protein]-L-lysine.. It functions in the pathway protein modification; protein ubiquitination. Functionally, putative E3 ubiquitin-protein ligase involved in the rhizobial infection process. Plays an important role in the early steps of infection thread formation and in growth and differentiation of nodules. The polypeptide is Putative E3 ubiquitin-protein ligase LIN-1 (Lotus japonicus (Lotus corniculatus var. japonicus)).